We begin with the raw amino-acid sequence, 576 residues long: MAGUK p55 subfamily member 7 (576 aa).

L27 domains lie at 10-64 (SEMG…EDCA) and 65-122 (PTPV…YDPE). Residues 139–220 (IIRLVKNKEP…AITFKVVPGI (82 aa)) form the PDZ domain. The region spanning 228-298 (EPKMFIKALF…PSKHFQERRL (71 aa)) is the SH3 domain. A Guanylate kinase-like domain is found at 368 to 560 (HRLVVLVGPT…AFSELKQALK (193 aa)).

Belongs to the MAGUK family.

Its subcellular location is the membrane. It is found in the cell junction. It localises to the tight junction. The protein resides in the adherens junction. In terms of biological role, acts as an important adapter that promotes epithelial cell polarity and tight junction formation. Involved in the assembly of protein complexes at sites of cell-cell contact. The sequence is that of MAGUK p55 subfamily member 7 (mpp7) from Danio rerio (Zebrafish).